A 568-amino-acid polypeptide reads, in one-letter code: Autophagy-related protein 18 (568 aa).

The stretch at 19–57 is one WD 1 repeat; the sequence is KPSSSVNFITFNQDGSCIAVGNNKGYSIFTTNPFTKCYD. The span at 162 to 171 shows a compositional bias: polar residues; it reads STDTSNSADN. Positions 162–210 are disordered; sequence STDTSNSADNSGSIGSGPASGSGAGSGSASMTSTDSTPDAQSHSYLAYP. Positions 175–187 are enriched in gly residues; sequence IGSGPASGSGAGS. Residues 188–198 show a composition bias toward low complexity; that stretch reads GSASMTSTDST. 2 WD repeats span residues 268–308 and 313–352; these read AHKS…KLYQ and TYPT…SLES. Positions 309–313 match the L/FRRG motif motif; it reads FRRGT. The segment at 350–429 is disordered; it reads LESKHKRKRA…ISGMSEDGKE (80 aa). Acidic residues predominate over residues 375–394; sequence DLDDEIEDDGDDSDVDDVES. Polar residues predominate over residues 405–421; it reads LSQGSSNSYTSMNSGIS. 2 WD repeats span residues 464–508 and 518–558; these read DFLP…DMVP and APAS…GGDC.

The protein belongs to the WD repeat PROPPIN family. As to quaternary structure, component of the PI(3,5)P2 regulatory complex.

Its subcellular location is the preautophagosomal structure membrane. It is found in the vacuole membrane. The protein localises to the endosome membrane. In terms of biological role, the PI(3,5)P2 regulatory complex regulates both the synthesis and turnover of phosphatidylinositol 3,5-bisphosphate (PtdIns(3,5)P2). Necessary for proper vacuole morphology. Plays an important role in osmotically-induced vacuole fragmentation. Required for cytoplasm to vacuole transport (Cvt) vesicle formation, pexophagy and starvation-induced autophagy. Involved in correct ATG9 trafficking to the pre-autophagosomal structure. Might also be involved in premeiotic DNA replication. The protein is Autophagy-related protein 18 (ATG18) of Meyerozyma guilliermondii (strain ATCC 6260 / CBS 566 / DSM 6381 / JCM 1539 / NBRC 10279 / NRRL Y-324) (Yeast).